Reading from the N-terminus, the 126-residue chain is Fluoride-specific ion channel FluC (126 aa).

4 consecutive transmembrane segments (helical) span residues 4-24, 33-53, 67-87, and 97-117; these read PLLS…FLGL, IPLG…FAMA, FVIT…IEIV, and MAML…CLGL. Na(+) contacts are provided by Gly74 and Thr77.

The protein belongs to the fluoride channel Fluc/FEX (TC 1.A.43) family.

It is found in the cell inner membrane. The enzyme catalyses fluoride(in) = fluoride(out). Its activity is regulated as follows. Na(+) is not transported, but it plays an essential structural role and its presence is essential for fluoride channel function. Fluoride-specific ion channel. Important for reducing fluoride concentration in the cell, thus reducing its toxicity. This chain is Fluoride-specific ion channel FluC, found in Acinetobacter baumannii (strain ATCC 17978 / DSM 105126 / CIP 53.77 / LMG 1025 / NCDC KC755 / 5377).